A 556-amino-acid polypeptide reads, in one-letter code: 2-succinyl-5-enolpyruvyl-6-hydroxy-3-cyclohexene-1-carboxylate synthase (556 aa).

Belongs to the TPP enzyme family. MenD subfamily. In terms of assembly, homodimer. It depends on Mg(2+) as a cofactor. Mn(2+) serves as cofactor. Requires thiamine diphosphate as cofactor.

It catalyses the reaction isochorismate + 2-oxoglutarate + H(+) = 5-enolpyruvoyl-6-hydroxy-2-succinyl-cyclohex-3-ene-1-carboxylate + CO2. It functions in the pathway quinol/quinone metabolism; 1,4-dihydroxy-2-naphthoate biosynthesis; 1,4-dihydroxy-2-naphthoate from chorismate: step 2/7. Its pathway is quinol/quinone metabolism; menaquinone biosynthesis. Catalyzes the thiamine diphosphate-dependent decarboxylation of 2-oxoglutarate and the subsequent addition of the resulting succinic semialdehyde-thiamine pyrophosphate anion to isochorismate to yield 2-succinyl-5-enolpyruvyl-6-hydroxy-3-cyclohexene-1-carboxylate (SEPHCHC). The sequence is that of 2-succinyl-5-enolpyruvyl-6-hydroxy-3-cyclohexene-1-carboxylate synthase from Klebsiella pneumoniae (strain 342).